The sequence spans 212 residues: Large ribosomal subunit protein uL1 (212 aa).

Belongs to the universal ribosomal protein uL1 family. In terms of assembly, part of the 50S ribosomal subunit.

In terms of biological role, binds directly to 23S rRNA. Probably involved in E site tRNA release. Functionally, protein L1 is also a translational repressor protein, it controls the translation of its operon by binding to its mRNA. This Methanosphaera stadtmanae (strain ATCC 43021 / DSM 3091 / JCM 11832 / MCB-3) protein is Large ribosomal subunit protein uL1.